Here is a 414-residue protein sequence, read N- to C-terminus: V-set and immunoglobulin domain-containing protein 8 (414 aa).

Residues 1–21 form the signal peptide; the sequence is MRVGGAFHLLLVCLSPALLSA. Ig-like V-type domains follow at residues 22–141 and 146–257; these read VRIN…VIVT and PAVP…VKVS. At 22 to 263 the chain is on the extracellular side; the sequence is VRINGDGQEV…VKVSDSRRIG (242 aa). Cystine bridges form between Cys-44–Cys-126 and Cys-167–Cys-239. The chain crosses the membrane as a helical span at residues 264-284; that stretch reads VIIGIVLGSLLALGCLAVGIW. Residues 285–414 lie on the Cytoplasmic side of the membrane; the sequence is GLVCCCCGGS…PVQCKNGLLV (130 aa).

The protein localises to the membrane. The polypeptide is V-set and immunoglobulin domain-containing protein 8 (Homo sapiens (Human)).